The chain runs to 858 residues: MSVVGLDVGSQSCYIAVARAGGIETIANEFSDRCTPSVISFGSKNRTIGVAAKNQQITHANNTVSSFKRFHGRAFNDPFIQKEKENLSYDLVPMKNGGVGIKVMYMDEEHFFSVEQITAMLLTKLKETAENNLKKPVTDCVISVPSFFTDAERRSVLDAAQIVGLNCLRLMNDMTAVALNYGIYKQDLPNAEEKPRVVVFVDMGHSSFQVSACAFNKGKLKVLGTAFDPFLGGKNFDEKLVEHFCAEFKTKYKLDAKSKIRALLRLHQECEKLKKLMSSNSTDLPLNIECFMNDKDVSGKMNRSQFEELCAELLQKIEVPLHSLMAQTQLKAEDVSAIEIVGGATRIPAVKERIAKFFGKDVSTTLNADEAVARGCALQCAILSPAFKVREFSVTDAVPFPISLVWNHDSEETEGVHEVFSRNHAAPFSKVLTFLRRGPFELEAFYSDPQGVPYPEAKIGRFVVQNVSAQKDGEKSRVKVKVRVNTHGIFTISTASMVEKVPTEEEDGSSLEADMECPNQRPTESSDVDKNIQQDNSEAGTQPQVQTDGQQTSQSPPSPELTSEESKTPDADKANEKKVDQPPEAKKPKIKVVNVELPVEANLVWQLGRDLLNMYIETEGKMIMQDKLEKERNDAKNAVEECVYEFRDKLCGPYEKFICEQEHEKFLRLLTETEDWLYEEGEDQAKQAYIDKLEELMKMGTPVKVRFQEAEERPKVLEELGQRLQHYAKIAADFRGKDEKYNHIDESEMKKVEKSVNEVMEWMNNVMNAQAKRSLDQDPVVRTHEIRAKVKELNNVCEPVVTQPKPKIESPKLERTPNGPNIDKKEDLEGKNNLGAEAPHQNGECHPNEKGSVNMDLD.

At S2 the chain carries N-acetylserine. K471 is subject to N6-acetyllysine. Disordered regions lie at residues 500–585 and 801–858; these read KVPT…PPEA and VTQP…MDLD. Residues 504–515 are compositionally biased toward acidic residues; that stretch reads EEEDGSSLEADM. Phosphoserine is present on residues S509 and S510. The segment covering 533 to 549 has biased composition (polar residues); sequence QQDNSEAGTQPQVQTDG. A Phosphoserine modification is found at S558. The residue at position 562 (T562) is a Phosphothreonine. Basic and acidic residues-rich tracts occupy residues 564-585 and 806-815; these read EESKTPDADKANEKKVDQPPEA and PKIESPKLER. S810 is subject to Phosphoserine. T816 bears the Phosphothreonine mark.

It belongs to the heat shock protein 70 family. Interacts with HSPA8/HSC70. Interacts with HSPA1A (via NBD) and HSPA1B (via NBD). Phosphorylation on Ser-509 may be important for regulation of the HSPA8/HSC70 chaperone activity. As to expression, expressed in neurons in the cerebrum and Purkinje cells in the cerebellum (at protein level). Expressed in testis and no expression or only low-level expression in liver, spleen, lung, and kidney (at protein level). Highly expressed in the brain and moderately expressed in lung, heart, thymus, spleen, liver, and small intestine.

Its subcellular location is the cytoplasm. It localises to the nucleus. Functionally, acts as a nucleotide-exchange factor (NEF) for chaperone proteins HSPA1A and HSPA1B, promoting the release of ADP from HSPA1A/B thereby triggering client/substrate protein release. Prevents the aggregation of denatured proteins in cells under severe stress, on which the ATP levels decrease markedly. Inhibits HSPA8/HSC70 ATPase and chaperone activities. This is Heat shock protein 105 kDa (Hsph1) from Mus musculus (Mouse).